The sequence spans 466 residues: Adenosylhomocysteinase (466 aa).

Substrate contacts are provided by T57, D132, and E192. Position 193–195 (193–195 (TTT)) interacts with NAD(+). Substrate contacts are provided by K222 and D226. Residues N227, 256–261 (GYGDVG), E279, N314, 335–337 (IGH), and N380 contribute to the NAD(+) site.

The protein belongs to the adenosylhomocysteinase family. NAD(+) serves as cofactor.

Its subcellular location is the cytoplasm. It catalyses the reaction S-adenosyl-L-homocysteine + H2O = L-homocysteine + adenosine. The protein operates within amino-acid biosynthesis; L-homocysteine biosynthesis; L-homocysteine from S-adenosyl-L-homocysteine: step 1/1. Functionally, may play a key role in the regulation of the intracellular concentration of adenosylhomocysteine. This is Adenosylhomocysteinase from Brucella abortus (strain S19).